The sequence spans 496 residues: MHNSPLYAAIDLGSNSFHMLVVREVAGALRTVTKVKRKVRLAAGLDPEFRLSRAAMERGWDCLRLFSEQLQDIPADNIRVVGTATLRLATNVDEFLSEAERVLNHSIEIISGEEEAKTIYEGVSWTSAGEGNRLVIDIGGASTELVIGEHSEAKLLNSLHMGCVTWLNNHFGDGELSEARFKQAIAAAKAVLEKVAEDYRALGWRTCVGASGTVQALQEIMLAQGKSERVTLPKLQELMGQAIACGKLDQLQLEGLAAERLTVFPSGLAILIAIFETLGIESMTLAGGALREGLIYGLLGNNHDCDARDRTADSLINRYQLDKEHAERVRDTAVEAFNQLQPAWRLSKRYGRPILRYAALLHEIGLCIEYKKAPQHAAYIIDNIDMPGFTPAQKKLLSALLFNQRDEFKLEPLEKQGAVTGRQAIRLARILRIALILCMRRTQGTVPRFTLEADEDALTLTLPSGWLDEHYLRASELRFEVERQQKMGWPTRLLEA.

The protein belongs to the GppA/Ppx family. GppA subfamily.

The enzyme catalyses guanosine 3'-diphosphate 5'-triphosphate + H2O = guanosine 3',5'-bis(diphosphate) + phosphate + H(+). It functions in the pathway purine metabolism; ppGpp biosynthesis; ppGpp from GTP: step 2/2. Functionally, catalyzes the conversion of pppGpp to ppGpp. Guanosine pentaphosphate (pppGpp) is a cytoplasmic signaling molecule which together with ppGpp controls the 'stringent response', an adaptive process that allows bacteria to respond to amino acid starvation, resulting in the coordinated regulation of numerous cellular activities. This chain is Guanosine-5'-triphosphate,3'-diphosphate pyrophosphatase, found in Aeromonas hydrophila subsp. hydrophila (strain ATCC 7966 / DSM 30187 / BCRC 13018 / CCUG 14551 / JCM 1027 / KCTC 2358 / NCIMB 9240 / NCTC 8049).